The sequence spans 1374 residues: MVSLRDNIESQPLSHNRRIRKNFGHINLVADIPNLIEIQKNSYEKNFLQLNIKDSERKNKGLQSILNSIFPISDSSNIANLEFVKYEFDTPKYDVDECSQRSLSYAAPLKVTLRLSIWDIDEDTGTREIKGIKEQEVYMGDIPLMTKNGTFIINGTERVVVSQMHRSPGVFFYHDEGKVHSSGKLLYSARVIPYRGSWLDFEFDAKDIIYFRIDRKRKLYATTLLRAIGMSTEEIIKFYYNSVTYKFVKNKGWSVKFIPQHITAHRLTSDLVDADTGNVLLKAGQKITPRLAQKYFGVGLNNILVTHETLIGKYLSEDLRDPASDEVLAKIGEMITSDMLKVINDLKIKNVNVLVINPQSGSYIRNTLFADKNQDREAALCDIFRVLRPGEPANIEAAESLFYNLFFDAERYDLSEVGRIKMNSRLELNISEEVTVLTIDDIKNIVRILVELKDGKGIIDDIDHLGNRRVRSVGELIENQFRIGLVRMEKSVIERMSAGDVDTVMPHDLVNSKILVSVVKEFFSTSQLSQFMDQTNPLSEITHKRRLSALGPGGLSRDRAGFEVRDVHPTHYGRICPIETPEGQNIGLINSMATYARINKHGFIESPYRRVKNGYVTDEVVYLSAIEEGKYKIGQANSKVDQDGKLQGEFINCRVEGGNFVMVEPDEVDFIDVTPMQVVSVAASLIPFLENDDANRALMGSNMQRQAVPLIKTEAPFVGTGVEGVVAKDSGASVLALHDGIVERVDSNRIVIRTLEQKVDGSPSVDIYNLLKFQKSNHNTCINQKPLVKVGHYVKKNDIIADGPSTDNGEIALGRNVLVAFLPWNGYNFEDSILISERIVKEDVFTSIHIEEFEVIARDTRLGPEEITRDIPNVSEEALRHLDEVGIIYVGAEVKAGDILVGKVTPKSESPITPEEKLLRAIFGEKAFDVKDSSLHVPSGVSGTVVEVRIFSRRGVEKDQRAIAIEKQQIEKLAKDRDDELEIIEHFVFSWLEKLLVGHVIINGPKQITAGQTITTEMLKGLSKGQLWQITVEDANVMNEIEQIKIHYDEKKYALDKRFTTKVEKLQSGDDLPQGALKVVKVFIATKHKLQPGDKMAGRHGNKGVISRIVPEEDMPFLEDGTVVDIVLNPLGLPSRMNIGQILETHLGWASINLAKKISTLVKEYKDNHIDIEEIKKFLLELYGKDINYILEGSEEEIISFCNKVSKGVYFATPVFDGAKVQDVKDMLELAGQDLSGQVKLIDGRTGEYFDRLVTVGHKYLLKLHHLVDNKIHSRSIGPYSLVTQQPLGGKSHFGGQRFGEMECWALQAYGAAYTLQEMLTVKSDDVNGRIKTYDSIVRGENNFESGIPESFNVMIKEFRSLCLNVKLEVTPSK.

The protein belongs to the RNA polymerase beta chain family. In terms of assembly, the RNAP catalytic core consists of 2 alpha, 1 beta, 1 beta' and 1 omega subunit. When a sigma factor is associated with the core the holoenzyme is formed, which can initiate transcription.

It carries out the reaction RNA(n) + a ribonucleoside 5'-triphosphate = RNA(n+1) + diphosphate. DNA-dependent RNA polymerase catalyzes the transcription of DNA into RNA using the four ribonucleoside triphosphates as substrates. The polypeptide is DNA-directed RNA polymerase subunit beta (Rickettsia prowazekii (strain Madrid E)).